The primary structure comprises 60 residues: uncharacterized protein (60 aa).

This is an uncharacterized protein from Dryophytes versicolor (chameleon treefrog).